An 80-amino-acid polypeptide reads, in one-letter code: MLSKEALIKILSQNEGGNDMKIADEVVPMIQKYLDIFIDEAVLRSLQSHKDINGERGDKSPLELSHQDLERIVGLLLMDM.

This sequence belongs to the CENP-X/MHF2 family. The MHF histone-fold complex is a heterotetramer of 2 MHF1-MHF2 heterodimers. Together with MPH1/FANCM, forms the FANCM-MHF complex. Component of the inner kinetochore constitutive centromere-associated network (CCAN) (also known as central kinetochore CTF19 complex in yeast), which is composed of at least AME1, CHL4, CNN1, CTF3, CTF19, IML3, MCM16, MCM21, MCM22, MHF1, MHF2, MIF2, NKP1, NKP2, OKP1 and WIP1.

In terms of biological role, DNA-binding component of a FANCM-MHF complex involved in DNA damage repair and genome maintenance. FANCM-MHF promotes gene conversion at blocked replication forks, probably by reversal of the stalled fork. Component of the kinetochore, a multiprotein complex that assembles on centromeric DNA and attaches chromosomes to spindle microtubules, mediating chromosome segregation and sister chromatid segregation during meiosis and mitosis. Component of the inner kinetochore constitutive centromere-associated network (CCAN), which serves as a structural platform for outer kinetochore assembly. This chain is Inner kinetochore subunit MHF2, found in Saccharomyces cerevisiae (strain ATCC 204508 / S288c) (Baker's yeast).